Here is a 362-residue protein sequence, read N- to C-terminus: Methylthioribose-1-phosphate isomerase (362 aa).

Residue aspartate 252 is the Proton donor of the active site.

It belongs to the eIF-2B alpha/beta/delta subunits family. MtnA subfamily.

The protein resides in the cytoplasm. The protein localises to the nucleus. It catalyses the reaction 5-(methylsulfanyl)-alpha-D-ribose 1-phosphate = 5-(methylsulfanyl)-D-ribulose 1-phosphate. Its pathway is amino-acid biosynthesis; L-methionine biosynthesis via salvage pathway; L-methionine from S-methyl-5-thio-alpha-D-ribose 1-phosphate: step 1/6. Functionally, catalyzes the interconversion of methylthioribose-1-phosphate (MTR-1-P) into methylthioribulose-1-phosphate (MTRu-1-P). The protein is Methylthioribose-1-phosphate isomerase of Drosophila mojavensis (Fruit fly).